The following is a 268-amino-acid chain: Helix-loop-helix protein 6 (268 aa).

Residues 117–130 (QSQVQPQLPTQSQP) show a composition bias toward low complexity. The interval 117–140 (QSQVQPQLPTQSQPKPSSKASLDT) is disordered. The segment covering 131-140 (KPSSKASLDT) has biased composition (polar residues). Residues 173 to 225 (SSVWKRNERERCRVRNVNDGYERLRKHLPVHFDEKRISKVDTLRLAIRYIKHL) form the bHLH domain.

As to expression, expressed in the gland cells of the pharynx and weakly in the pharyngeal neuron.

The protein resides in the nucleus. In terms of biological role, transcription factor that regulates the development of the g2 pharyngeal gland cells and pharyngeal gland function and thereby is required for feeding. Required for the expression of a number of genes in the pharyngeal gland, possibly by binding to the E box motif (5'-CANNTG-3') in the promoter region of these genes. Positively regulates the expression of genes encoding mucin-like proteins, which lubricate the pharyngeal tract to ensure efficient passage of the bacterial food source. Exhibits pharyngeal gland-specific positive autoregulation activity. The sequence is that of Helix-loop-helix protein 6 (hlh-6) from Caenorhabditis elegans.